We begin with the raw amino-acid sequence, 892 residues long: MRVSYNWLKDYVKVGLSPQELAERLTARGVVVENVVRANPGVEGVVVGRVVAMERHPNADTLWVCQVDVGGGRVLQILTGAQNVTVGALVPAAVPGAKLPGGVTMGVKKLRGLDSHGMLCSEAELQVGDDADGILILPPEPGLEPGMDVAEVLGLNDWIFELDLTANYAAHCQSMLGVAQEVAALVGGEVNRPSTYTPDAPGTDVRNLIAVQIDAPDLCSRYVARVVRGVKIGPSPLWLQARLRAAGMRPINNIVDIANFVMLETGQPLHTFDYAQIRGQRIIVRRARTGERFTTLDGQERVMDESVLVIADAERPVALAGVMGGEDSEVTDQTADILIESAHFDNINNRRTSLRYNLPSEASKRFTKGVDPSGCVAAADRAAQLMAELAGGTVVAGHVDVCPRPAVPPVILLRTERANALTGLKLTPERMAEHLRSLGMAVLTPADLAADLALGAPESDEEPGEDLGGHPVWTALHQVSPVPSDPVVYRTWAEAAWAEVEDAGSRLEALLGGGESDGKAAASGEGVSPGGASDGILVVVVPTRRSDVAVEVDLIEEIARCEGYDAIPLELPVLSSHRGGRSRQGEVKLAARRALAAAGLTEVLTHSLTHPRVYDMLALPEDDPNRRCLALANPMYEDRSTLRTMLLPCLLDVVRYNANRQVRDLAIFEISHVYRPVEGEQLPDEPLMIGLAMTGNLAPLGWNSPERPADFFALKGVVEHLLAELGVPDARFERSAHPSLHPGRQAALVVGGKPVGLLGELHPQVQERWELPGRVYVAELAFAPLMEAMLPQAVYRPVPRFPAVTRDVAVVVDLDLTAHRLETAIREAGGDLLEEVRLFDVYQGERVAEGRRSLAYRLVYRAADRTLTDEELEPVHNRVREALKALGAELRS.

The region spanning 39–150 (NPGVEGVVVG…PGLEPGMDVA (112 aa)) is the tRNA-binding domain. The 164-residue stretch at 406-569 (AVPPVILLRT…RCEGYDAIPL (164 aa)) folds into the B5 domain. An insert region spans residues 442 to 518 (VLTPADLAAD…ALLGGGESDG (77 aa)). Mg(2+)-binding residues include D547, D553, E556, and E557. In terms of domain architecture, FDX-ACB spans 799-891 (PRFPAVTRDV…ALKALGAELR (93 aa)).

It belongs to the phenylalanyl-tRNA synthetase beta subunit family. Type 1 subfamily. In terms of assembly, tetramer of two alpha and two beta subunits. Requires Mg(2+) as cofactor.

The protein localises to the cytoplasm. The catalysed reaction is tRNA(Phe) + L-phenylalanine + ATP = L-phenylalanyl-tRNA(Phe) + AMP + diphosphate + H(+). This is Phenylalanine--tRNA ligase beta subunit from Symbiobacterium thermophilum (strain DSM 24528 / JCM 14929 / IAM 14863 / T).